Consider the following 446-residue polypeptide: Beta-glucosidase A (446 aa).

Residue glutamate 166 is the Proton donor of the active site. Catalysis depends on glutamate 351, which acts as the Nucleophile.

It belongs to the glycosyl hydrolase 1 family.

It carries out the reaction Hydrolysis of terminal, non-reducing beta-D-glucosyl residues with release of beta-D-glucose.. It participates in glycan metabolism; cellulose degradation. This chain is Beta-glucosidase A (bglA), found in Thermotoga maritima (strain ATCC 43589 / DSM 3109 / JCM 10099 / NBRC 100826 / MSB8).